Consider the following 123-residue polypeptide: Small ribosomal subunit protein uS12 (123 aa).

The segment at 1–22 (MATINQLVRQPRKRSVEKSDVP) is disordered. 3-methylthioaspartic acid is present on D89. The segment at 100–123 (GSLDTSGVKGRNQGRSKYGTKRPK) is disordered. Residues 111–123 (NQGRSKYGTKRPK) are compositionally biased toward basic residues.

Belongs to the universal ribosomal protein uS12 family. In terms of assembly, part of the 30S ribosomal subunit. Contacts proteins S8 and S17. May interact with IF1 in the 30S initiation complex.

With S4 and S5 plays an important role in translational accuracy. Functionally, interacts with and stabilizes bases of the 16S rRNA that are involved in tRNA selection in the A site and with the mRNA backbone. Located at the interface of the 30S and 50S subunits, it traverses the body of the 30S subunit contacting proteins on the other side and probably holding the rRNA structure together. The combined cluster of proteins S8, S12 and S17 appears to hold together the shoulder and platform of the 30S subunit. In Pseudomonas putida (strain GB-1), this protein is Small ribosomal subunit protein uS12.